Reading from the N-terminus, the 339-residue chain is DNA-directed RNA polymerase subunit alpha (339 aa).

Residues 1–235 are alpha N-terminal domain (alpha-NTD); sequence MVIQKNWQEL…DQLQIFVNFE (235 aa). Positions 251–339 are alpha C-terminal domain (alpha-CTD); sequence FNPALLKKVD…DLAKRFEEHY (89 aa).

Belongs to the RNA polymerase alpha chain family. As to quaternary structure, homodimer. The RNAP catalytic core consists of 2 alpha, 1 beta, 1 beta' and 1 omega subunit. When a sigma factor is associated with the core the holoenzyme is formed, which can initiate transcription.

The enzyme catalyses RNA(n) + a ribonucleoside 5'-triphosphate = RNA(n+1) + diphosphate. Its function is as follows. DNA-dependent RNA polymerase catalyzes the transcription of DNA into RNA using the four ribonucleoside triphosphates as substrates. This is DNA-directed RNA polymerase subunit alpha from Methylobacterium nodulans (strain LMG 21967 / CNCM I-2342 / ORS 2060).